Reading from the N-terminus, the 484-residue chain is Solute carrier family 40 member 1 (484 aa).

11 helical membrane-spanning segments follow: residues 58–78, 94–114, 123–143, 189–209, 212–232, 279–299, 308–328, 346–366, 377–397, 413–433, and 442–462; these read LLTA…GPIV, WLLL…ALLV, GFPA…LAAL, VLSG…ALAA, LAAV…FPAL, VVLP…FGTL, GIPA…GIAA, LWSI…VWAG, LMGG…AVMQ, GVQN…GIIV, and LIVL…MHVY.

Belongs to the ferroportin (FP) (TC 2.A.100) family. SLC40A subfamily.

Its subcellular location is the membrane. May be involved in iron transport and iron homeostasis. This chain is Solute carrier family 40 member 1, found in Oryza sativa subsp. japonica (Rice).